A 726-amino-acid chain; its full sequence is Catalase-peroxidase (726 aa).

Positions 1 to 33 (MSTSDDIHNTTATGKCPFHQGGHDQSAGAGTTT) are disordered. A cross-link (tryptophyl-tyrosyl-methioninium (Trp-Tyr) (with M-252)) is located at residues 105 to 226 (WHGAGTYRSI…LGATEMGLIY (122 aa)). The Proton acceptor role is filled by H106. A cross-link (tryptophyl-tyrosyl-methioninium (Tyr-Met) (with W-105)) is located at residues 226–252 (YVNPEGPDHSGEPLSAAAAIRATFGNM). Heme b is bound at residue H267.

This sequence belongs to the peroxidase family. Peroxidase/catalase subfamily. As to quaternary structure, homodimer or homotetramer. Requires heme b as cofactor. Formation of the three residue Trp-Tyr-Met cross-link is important for the catalase, but not the peroxidase activity of the enzyme.

The catalysed reaction is H2O2 + AH2 = A + 2 H2O. It catalyses the reaction 2 H2O2 = O2 + 2 H2O. Functionally, bifunctional enzyme with both catalase and broad-spectrum peroxidase activity. The sequence is that of Catalase-peroxidase from Shigella boydii serotype 4 (strain Sb227).